The sequence spans 65 residues: Small ribosomal subunit protein bS21 (65 aa).

The tract at residues Gly45–Ser65 is disordered. Positions Lys48–Gln57 are enriched in basic residues.

This sequence belongs to the bacterial ribosomal protein bS21 family.

This is Small ribosomal subunit protein bS21 from Chlorobium phaeobacteroides (strain DSM 266 / SMG 266 / 2430).